The following is a 355-amino-acid chain: Meiotic coiled-coil protein 4 (355 aa).

The stretch at 298-338 (QRLSRTEINKEIIEIEKLELEVVQFQMSIANLINTQVEVTN) forms a coiled coil.

The protein resides in the cytoplasm. Its function is as follows. Has a role in meiosis. The sequence is that of Meiotic coiled-coil protein 4 (mcp4) from Schizosaccharomyces pombe (strain 972 / ATCC 24843) (Fission yeast).